The sequence spans 807 residues: Ribosome-releasing factor 2, mitochondrial (807 aa).

The N-terminal 18 residues, 1–18 (MFCRKYVFQTWKQLSRSY), are a transit peptide targeting the mitochondrion. The tr-type G domain occupies 27–315 (AKTRNIGIIA…GITKYLPSPL (289 aa)). Residues 36–43 (AHIDAGKT), 100–104 (DTPGH), and 154–157 (NKMD) each bind GTP.

This sequence belongs to the TRAFAC class translation factor GTPase superfamily. Classic translation factor GTPase family. EF-G/EF-2 subfamily.

Its subcellular location is the mitochondrion. Its function is as follows. Mitochondrial GTPase that mediates the disassembly of ribosomes from messenger RNA at the termination of mitochondrial protein biosynthesis. Not involved in the GTP-dependent ribosomal translocation step during translation elongation. This is Ribosome-releasing factor 2, mitochondrial from Candida albicans (strain SC5314 / ATCC MYA-2876) (Yeast).